The following is an 801-amino-acid chain: Protocadherin beta-8 (801 aa).

The N-terminal stretch at 1–29 (MEASGKLICRQRQVLFSFLLLGLSLAGAA) is a signal peptide. The Extracellular segment spans residues 30–691 (EPRSYSVVEE…GQADSLTVYL (662 aa)). Cadherin domains follow at residues 36–134 (VVEE…SPVF), 139–243 (MLVK…APEF), 248–348 (YRVQ…APEV), 353–452 (FTSP…APAF), and 457–562 (YTLF…SPFV). A disulfide bond links C97 and C103. N-linked (GlcNAc...) asparagine glycans are attached at residues N419 and N437. An N-linked (GlcNAc...) asparagine glycan is attached at N568. Residues 569–672 (SSAPCTELVP…LVDGFSQPYL (104 aa)) form the Cadherin 6 domain. The chain crosses the membrane as a helical span at residues 692 to 710 (VVALASVSSLFLFSVLLFV). The Cytoplasmic portion of the chain corresponds to 711–801 (AVRLCRRSRA…NGFGFSLQLK (91 aa)).

Forms homodimers in trans (molecules expressed by two different cells). Forms promiscuous heterodimers in cis (at the plasma membrane of the same cell) with other protocadherins.

It localises to the cell membrane. Its function is as follows. Calcium-dependent cell-adhesion protein involved in cells self-recognition and non-self discrimination. Thereby, it is involved in the establishment and maintenance of specific neuronal connections in the brain. The polypeptide is Protocadherin beta-8 (Pan troglodytes (Chimpanzee)).